Reading from the N-terminus, the 173-residue chain is Transcription factor S-II-related protein (173 aa).

The 121-residue stretch at isoleucine 9–valine 129 folds into the TFIIS central domain. The segment at glutamate 130–lysine 170 adopts a TFIIS-type zinc-finger fold. Residues cysteine 134, cysteine 137, cysteine 162, and cysteine 165 each coordinate Zn(2+).

It belongs to the TFS-II family.

The polypeptide is Transcription factor S-II-related protein (Acanthamoeba polyphaga mimivirus (APMV)).